A 295-amino-acid polypeptide reads, in one-letter code: Malonyl-[acyl-carrier protein] O-methyltransferase (295 aa).

It belongs to the methyltransferase superfamily.

The enzyme catalyses malonyl-[ACP] + S-adenosyl-L-methionine = malonyl-[ACP] methyl ester + S-adenosyl-L-homocysteine. The protein operates within cofactor biosynthesis; biotin biosynthesis. Its function is as follows. Converts the free carboxyl group of a malonyl-thioester to its methyl ester by transfer of a methyl group from S-adenosyl-L-methionine (SAM). It allows to synthesize pimeloyl-ACP via the fatty acid synthetic pathway. This Xylella fastidiosa (strain M23) protein is Malonyl-[acyl-carrier protein] O-methyltransferase.